The chain runs to 124 residues: Cytochrome c oxidase subunit 4 isoform 1, mitochondrial (124 aa).

Position 4 is an N6-acetyllysine; alternate (Lys-4). An N6-succinyllysine; alternate modification is found at Lys-4. 2 positions are modified to phosphoserine: Ser-31 and Ser-33. N6-acetyllysine; alternate is present on Lys-35. Lys-35 carries the N6-succinyllysine; alternate modification. Lys-42 is subject to N6-acetyllysine.

The protein belongs to the cytochrome c oxidase IV family. As to quaternary structure, component of the cytochrome c oxidase (complex IV, CIV), a multisubunit enzyme composed of 14 subunits. The complex is composed of a catalytic core of 3 subunits MT-CO1, MT-CO2 and MT-CO3, encoded in the mitochondrial DNA, and 11 supernumerary subunits COX4I, COX5A, COX5B, COX6A, COX6B, COX6C, COX7A, COX7B, COX7C, COX8 and NDUFA4, which are encoded in the nuclear genome. The complex exists as a monomer or a dimer and forms supercomplexes (SCs) in the inner mitochondrial membrane with NADH-ubiquinone oxidoreductase (complex I, CI) and ubiquinol-cytochrome c oxidoreductase (cytochrome b-c1 complex, complex III, CIII), resulting in different assemblies (supercomplex SCI(1)III(2)IV(1) and megacomplex MCI(2)III(2)IV(2)). Interacts with PHB2; the interaction decreases in absence of SPHK2. Interacts with AFG1L. Interacts with ABCB7; this interaction allows the regulation of cellular iron homeostasis and cellular reactive oxygen species (ROS) levels in cardiomyocytes. Interacts with FLVCR2; this interaction occurs in the absence of heme and is disrupted upon heme binding. Interacts with IRGC.

Its subcellular location is the mitochondrion inner membrane. It functions in the pathway energy metabolism; oxidative phosphorylation. Functionally, component of the cytochrome c oxidase, the last enzyme in the mitochondrial electron transport chain which drives oxidative phosphorylation. The respiratory chain contains 3 multisubunit complexes succinate dehydrogenase (complex II, CII), ubiquinol-cytochrome c oxidoreductase (cytochrome b-c1 complex, complex III, CIII) and cytochrome c oxidase (complex IV, CIV), that cooperate to transfer electrons derived from NADH and succinate to molecular oxygen, creating an electrochemical gradient over the inner membrane that drives transmembrane transport and the ATP synthase. Cytochrome c oxidase is the component of the respiratory chain that catalyzes the reduction of oxygen to water. Electrons originating from reduced cytochrome c in the intermembrane space (IMS) are transferred via the dinuclear copper A center (CU(A)) of subunit 2 and heme A of subunit 1 to the active site in subunit 1, a binuclear center (BNC) formed by heme A3 and copper B (CU(B)). The BNC reduces molecular oxygen to 2 water molecules using 4 electrons from cytochrome c in the IMS and 4 protons from the mitochondrial matrix. This is Cytochrome c oxidase subunit 4 isoform 1, mitochondrial (COX4I1) from Saimiri sciureus (Common squirrel monkey).